The following is a 230-amino-acid chain: Transmembrane 4 L6 family member 20 (230 aa).

The Lumenal segment spans residues 1–11 (MTCCEGWTSCN). A helical membrane pass occupies residues 12–32 (GFSLLVLLLLGVTLNAIPLIL). The Cytoplasmic portion of the chain corresponds to 33-44 (NFVDEDQFFENP). The helical transmembrane segment at 45–65 (ISCFEWWFPGIIGAGVMAIPA) threads the bilayer. At 66-83 (TTMSLAARKRACCNNKTG) the chain is on the lumenal side. Residues 84–104 (MFLSSLLNAITVIGAAYCLLV) traverse the membrane as a helical segment. At 105–185 (SIQALAEGPL…HFNSIENQHR (81 aa)) the chain is on the cytoplasmic side. The chain crosses the membrane as a helical span at residues 186–206 (IIHFSVFLGLLLVGILEILFG). Topologically, residues 207-230 (LSQIIIGFFGCLCGGVSNGRSQIV) are lumenal.

The protein belongs to the L6 tetraspanin family. Post-translationally, glycosylated at Asn-132 in presence of ceramide which inverts the orientation of TM4SF20 in membranes exposing these residues to the endoplasmic reticulum lumen. Cleaved by signal peptidase at Ser-14 but the peptide does not act as a signal peptide. Cleavage is inhibited by ceramide which inverts the orientation of TM4SF20 in membranes exposing the N-terminus to the cytosol and not to the endoplasmic reticulum lumen.

The protein localises to the membrane. Its subcellular location is the endoplasmic reticulum membrane. Polytopic transmembrane protein. Inhibits regulated intramembrane proteolysis (RIP) of CREB3L1, inhibiting its activation and the induction of collagen synthesis. In response to ceramide, which alters TM4SF20 membrane topology, stimulates RIP activation of CREB3L1. Ceramide reverses the direction through which transmembrane helices are translocated into the endoplasmic reticulum membrane during translation of TM4SF20, this mechanism is called 'regulated alternative translocation' (RAT) and regulates the function of the transmembrane protein. The protein is Transmembrane 4 L6 family member 20 (TM4SF20) of Bos taurus (Bovine).